Reading from the N-terminus, the 197-residue chain is Caspase recruitment domain-containing protein 16 (197 aa).

In terms of domain architecture, CARD spans 1-91; sequence MADKVLKEKR…YLAETLGLSA (91 aa).

Homooligomer. Interacts with CASP1, CASP4, CARD8 and RIPK2. In terms of tissue distribution, widely expressed. Expressed at higher level in placenta, spleen, lymph node and bone marrow. Weakly or not expressed in thymus.

Functionally, caspase inhibitor. Acts as a regulator of procaspase-1/CASP1 activation implicated in the regulation of the proteolytic maturation of pro-interleukin-1 beta (IL1B) and its release during inflammation. Inhibits the release of IL1B in response to LPS in monocytes. Also induces NF-kappa-B activation during the pro-inflammatory cytokine response. Also able to inhibit CASP1-mediated neuronal cell death, TNF-alpha, hypoxia-, UV-, and staurosporine-mediated cell death but not ER stress-mediated cell death. Acts by preventing activation of caspases CASP1 and CASP4, possibly by preventing the interaction between CASP1 and RIPK2. This is Caspase recruitment domain-containing protein 16 (CARD16) from Homo sapiens (Human).